The following is a 406-amino-acid chain: Peptidyl-alpha-hydroxyglycine alpha-amidating lyase 2 (406 aa).

The signal sequence occupies residues 1–19 (MSRLLFVALLAISLGYVAS). NHL repeat units lie at residues 168–209 (GAIK…FKPF), 218–261 (GKRF…FNAA), 264–308 (LLRT…PKAG), and 358–402 (DPRS…RVWK). 2 disulfide bridges follow: Cys-231–Cys-251 and Cys-293–Cys-304.

Belongs to the peptidyl-alpha-hydroxyglycine alpha-amidating lyase family. Requires Zn(2+) as cofactor. N-glycosylated. Only found in a subset of neurons distributed throughout all levels of the central nervous system (CNS). Present in at least some neuroendocrine cells. In adult brains, it is only present in a small handful of cells, the majority of which being distributed in distal parts of the medulla, with a higher expression in the posterior surface of the brain (at protein level).

The protein localises to the secreted. It catalyses the reaction a [peptide]-C-terminal (2S)-2-hydroxyglycine = a [peptide]-C-terminal amide + glyoxylate. In terms of biological role, peptidyl-alpha-hydroxylglycine alpha-amidating lyase that catalyzes an essential reaction in C-terminal alpha-amidation of peptides. Mediates the dismutation of the unstable peptidyl(2-hydroxyglycine) intermediate to glyoxylate and the corresponding desglycine peptide amide. C-terminal amidation of peptides such as neuropeptides is essential for full biological activity. The protein is Peptidyl-alpha-hydroxyglycine alpha-amidating lyase 2 (Pal2) of Drosophila melanogaster (Fruit fly).